The sequence spans 720 residues: Ornithine decarboxylase (720 aa).

Position 354 is an N6-(pyridoxal phosphate)lysine (Lys-354).

The protein belongs to the Orn/Lys/Arg decarboxylase class-I family. Pyridoxal 5'-phosphate is required as a cofactor.

The enzyme catalyses L-ornithine + H(+) = putrescine + CO2. The protein is Ornithine decarboxylase (speF) of Haemophilus influenzae (strain ATCC 51907 / DSM 11121 / KW20 / Rd).